The chain runs to 323 residues: Homoserine kinase (323 aa).

97-107 (PHGRGMGSSGA) is an ATP binding site.

It belongs to the GHMP kinase family. Homoserine kinase subfamily.

It localises to the cytoplasm. The catalysed reaction is L-homoserine + ATP = O-phospho-L-homoserine + ADP + H(+). It functions in the pathway amino-acid biosynthesis; L-threonine biosynthesis; L-threonine from L-aspartate: step 4/5. Functionally, catalyzes the ATP-dependent phosphorylation of L-homoserine to L-homoserine phosphate. This Leifsonia xyli subsp. xyli (strain CTCB07) protein is Homoserine kinase.